Consider the following 106-residue polypeptide: CRISPR-associated endoribonuclease Cas2 (106 aa).

Residue Asp22 coordinates Mg(2+).

The protein belongs to the CRISPR-associated endoribonuclease Cas2 protein family. As to quaternary structure, homodimer, forms a heterotetramer with a Cas1 homodimer. Mg(2+) serves as cofactor.

Functionally, CRISPR (clustered regularly interspaced short palindromic repeat), is an adaptive immune system that provides protection against mobile genetic elements (viruses, transposable elements and conjugative plasmids). CRISPR clusters contain sequences complementary to antecedent mobile elements and target invading nucleic acids. CRISPR clusters are transcribed and processed into CRISPR RNA (crRNA). Functions as a ssRNA-specific endoribonuclease. Involved in the integration of spacer DNA into the CRISPR cassette. The chain is CRISPR-associated endoribonuclease Cas2 from Fusobacterium nucleatum subsp. nucleatum (strain ATCC 25586 / DSM 15643 / BCRC 10681 / CIP 101130 / JCM 8532 / KCTC 2640 / LMG 13131 / VPI 4355).